The chain runs to 468 residues: MDNLKVLFEENLFSDLQLIVEDSNESIVLNVHRNILYFSCDFFKKLLIGQFSETNDKSIKIIVHNAKITSCVIKNFYGIDDKLPEYPDWMYYLETYRCYDYFGMKIPVDKLLELTVPSEGFELLLQIVDLLDYCDELGHLIIRNLPLDYDINDLSKDFVTDLQRLSNEYQIICTKHHTIKIFNNKLYKPIKTIHHSENITSLCYDNNNKRIIYGDLKGTIYAYDFFSNKIIFNLQNIQTNKTLPNNVIHLAIINDKLISVYFDGKITVRNSLDGTLCYVIKLIENPFLFKVCPHTNCIFHFNTHGFTNVWSIDTGNLIHKLSQFTNTMFNTLKNDLIIFWRENNLILCNYPSMDEIGTLCKEYSFPPLVLLNKQHILVGCHNGLMDIWNLKKLTLVKSTQLFDVPIISMTYSPNGDQLIVANCDREVRILNSDNYEIIYTKNINKDNNNKLLTISLHDAEKIEKLNIL.

The BTB domain maps to 14–85; the sequence is SDLQLIVEDS…FYGIDDKLPE (72 aa). 3 WD repeats span residues 194 to 233, 354 to 398, and 401 to 440; these read HHSENITSLCYDNNNKRIIYGDLKGTIYAYDFFSNKIIFN, DEIG…LVKS, and LFDVPIISMTYSPNGDQLIVANCDREVRILNSDNYEIIYT.

Belongs to the mimivirus BTB/WD family.

In Acanthamoeba polyphaga (Amoeba), this protein is Putative BTB/POZ domain and WD-repeat protein R154.